The sequence spans 439 residues: Xylose isomerase (439 aa).

Catalysis depends on residues His101 and Asp104. Mg(2+) contacts are provided by Glu232, Glu268, His271, Asp296, Asp307, Asp309, and Asp339.

This sequence belongs to the xylose isomerase family. As to quaternary structure, homotetramer. Requires Mg(2+) as cofactor.

It is found in the cytoplasm. The catalysed reaction is alpha-D-xylose = alpha-D-xylulofuranose. In Thermoanaerobacterium saccharolyticum, this protein is Xylose isomerase (xylA).